Here is a 351-residue protein sequence, read N- to C-terminus: DNA polymerase IV (351 aa).

The UmuC domain occupies 4–185 (IIHVDMDCFF…LPLAKIPGVG (182 aa)). Residues aspartate 8 and aspartate 103 each contribute to the Mg(2+) site. Glutamate 104 is an active-site residue.

The protein belongs to the DNA polymerase type-Y family. Monomer. Mg(2+) serves as cofactor.

Its subcellular location is the cytoplasm. It catalyses the reaction DNA(n) + a 2'-deoxyribonucleoside 5'-triphosphate = DNA(n+1) + diphosphate. In terms of biological role, poorly processive, error-prone DNA polymerase involved in untargeted mutagenesis. Copies undamaged DNA at stalled replication forks, which arise in vivo from mismatched or misaligned primer ends. These misaligned primers can be extended by PolIV. Exhibits no 3'-5' exonuclease (proofreading) activity. May be involved in translesional synthesis, in conjunction with the beta clamp from PolIII. The chain is DNA polymerase IV from Escherichia coli O1:K1 / APEC.